The following is a 447-amino-acid chain: Mannose/glucose-specific lectin (447 aa).

3 tandem repeats follow at residues 1 to 149, 150 to 295, and 296 to 447. The tract at residues 1-447 is 3 X approximate tandem repeats; that stretch reads SLKGMISVGP…GIFVKPDTAV (447 aa). Jacalin-type lectin domains follow at residues 5-148, 153-294, and 300-443; these read MISV…FVQP, TISF…YVKP, and SISI…FVKP.

This sequence belongs to the jacalin lectin family. As to quaternary structure, homodimer. The N-terminus is blocked.

Functionally, mannose/glucose specific lectin. Shows agglutinating activity against rabbit erythrocytes. This chain is Mannose/glucose-specific lectin, found in Parkia platycephala.